We begin with the raw amino-acid sequence, 214 residues long: Ribosomal RNA small subunit methyltransferase G (214 aa).

S-adenosyl-L-methionine is bound by residues Gly-78, Leu-83, Ala-129–Glu-130, and Arg-144.

This sequence belongs to the methyltransferase superfamily. RNA methyltransferase RsmG family.

The protein resides in the cytoplasm. The catalysed reaction is guanosine(527) in 16S rRNA + S-adenosyl-L-methionine = N(7)-methylguanosine(527) in 16S rRNA + S-adenosyl-L-homocysteine. Functionally, specifically methylates the N7 position of guanine in position 527 of 16S rRNA. The sequence is that of Ribosomal RNA small subunit methyltransferase G from Marinobacter nauticus (strain ATCC 700491 / DSM 11845 / VT8) (Marinobacter aquaeolei).